The chain runs to 359 residues: tRNA-specific 2-thiouridylase MnmA (359 aa).

Residues 10 to 17 (GISGGVDS) and Leu-36 each bind ATP. The active-site Nucleophile is Cys-101. The cysteines at positions 101 and 197 are disulfide-linked. Gly-125 is a binding site for ATP. An interaction with tRNA region spans residues 147–149 (KDQ). The Cysteine persulfide intermediate role is filled by Cys-197. Residues 306–307 (RY) are interaction with tRNA.

This sequence belongs to the MnmA/TRMU family.

Its subcellular location is the cytoplasm. It catalyses the reaction S-sulfanyl-L-cysteinyl-[protein] + uridine(34) in tRNA + AH2 + ATP = 2-thiouridine(34) in tRNA + L-cysteinyl-[protein] + A + AMP + diphosphate + H(+). Catalyzes the 2-thiolation of uridine at the wobble position (U34) of tRNA, leading to the formation of s(2)U34. In Chlorobium chlorochromatii (strain CaD3), this protein is tRNA-specific 2-thiouridylase MnmA.